Here is an 874-residue protein sequence, read N- to C-terminus: Alanine--tRNA ligase (874 aa).

Zn(2+) contacts are provided by histidine 562, histidine 566, cysteine 664, and histidine 668.

Belongs to the class-II aminoacyl-tRNA synthetase family. Zn(2+) serves as cofactor.

It is found in the cytoplasm. It carries out the reaction tRNA(Ala) + L-alanine + ATP = L-alanyl-tRNA(Ala) + AMP + diphosphate. Its function is as follows. Catalyzes the attachment of alanine to tRNA(Ala) in a two-step reaction: alanine is first activated by ATP to form Ala-AMP and then transferred to the acceptor end of tRNA(Ala). Also edits incorrectly charged Ser-tRNA(Ala) and Gly-tRNA(Ala) via its editing domain. The sequence is that of Alanine--tRNA ligase from Neisseria meningitidis serogroup C (strain 053442).